The chain runs to 285 residues: Probable nudix hydrolase C6G9.05 (285 aa).

Positions 114-254 (TRFASVLMPL…DLLYVEFNID (141 aa)) constitute a Nudix hydrolase domain. Positions 153 to 175 (GRVEPSDGSHYYAALRETYEEIG) match the Nudix box motif. Glutamate 169 and glutamate 173 together coordinate Mg(2+).

Belongs to the Nudix hydrolase family. PCD1 subfamily. Mn(2+) serves as cofactor. Requires Mg(2+) as cofactor.

Probably mediates the hydrolysis of some nucleoside diphosphate derivatives. The chain is Probable nudix hydrolase C6G9.05 from Schizosaccharomyces pombe (strain 972 / ATCC 24843) (Fission yeast).